Here is a 190-residue protein sequence, read N- to C-terminus: Potassium-transporting ATPase KdpC subunit (190 aa).

A helical transmembrane segment spans residues 10-30 (TFLFLLLITGGVYPLLTTALG).

The protein belongs to the KdpC family. As to quaternary structure, the system is composed of three essential subunits: KdpA, KdpB and KdpC.

The protein resides in the cell inner membrane. In terms of biological role, part of the high-affinity ATP-driven potassium transport (or Kdp) system, which catalyzes the hydrolysis of ATP coupled with the electrogenic transport of potassium into the cytoplasm. This subunit acts as a catalytic chaperone that increases the ATP-binding affinity of the ATP-hydrolyzing subunit KdpB by the formation of a transient KdpB/KdpC/ATP ternary complex. The protein is Potassium-transporting ATPase KdpC subunit of Escherichia coli O45:K1 (strain S88 / ExPEC).